Here is a 453-residue protein sequence, read N- to C-terminus: Growth/differentiation factor 9 (453 aa).

A signal peptide spans 1–25 (MALPNKFFLWFCCFAWLCFPISLDS). The propeptide occupies 26-318 (QPSRGEAQIV…EGVRLSRHRR (293 aa)). N106, N163, N236, N255, and N269 each carry an N-linked (GlcNAc...) asparagine glycan. The interval 281 to 300 (SLHPKRKPSQDPDQKRGLSA) is disordered. N337 carries N-linked (GlcNAc...) asparagine glycosylation. 3 cysteine pairs are disulfide-bonded: C352–C418, C381–C450, and C385–C452.

Belongs to the TGF-beta family. As to quaternary structure, homodimer or heterodimer (Potential). But, in contrast to other members of this family, cannot be disulfide-linked. In terms of processing, phosphorylated; phosphorylation is critical for GDF9 function.

The protein resides in the secreted. In terms of biological role, required for ovarian folliculogenesis. The sequence is that of Growth/differentiation factor 9 (GDF9) from Bos taurus (Bovine).